The chain runs to 410 residues: Serine hydroxymethyltransferase (410 aa).

(6S)-5,6,7,8-tetrahydrofolate contacts are provided by residues leucine 119 and 123–125; that span reads GHL. Lysine 228 carries the post-translational modification N6-(pyridoxal phosphate)lysine. 351-353 provides a ligand contact to (6S)-5,6,7,8-tetrahydrofolate; it reads SPF.

The protein belongs to the SHMT family. Homodimer. Requires pyridoxal 5'-phosphate as cofactor.

The protein resides in the cytoplasm. The catalysed reaction is (6R)-5,10-methylene-5,6,7,8-tetrahydrofolate + glycine + H2O = (6S)-5,6,7,8-tetrahydrofolate + L-serine. Its pathway is one-carbon metabolism; tetrahydrofolate interconversion. It functions in the pathway amino-acid biosynthesis; glycine biosynthesis; glycine from L-serine: step 1/1. Catalyzes the reversible interconversion of serine and glycine with tetrahydrofolate (THF) serving as the one-carbon carrier. This reaction serves as the major source of one-carbon groups required for the biosynthesis of purines, thymidylate, methionine, and other important biomolecules. Also exhibits THF-independent aldolase activity toward beta-hydroxyamino acids, producing glycine and aldehydes, via a retro-aldol mechanism. This Clostridium perfringens (strain 13 / Type A) protein is Serine hydroxymethyltransferase.